Consider the following 419-residue polypeptide: Delta(8)-fatty-acid desaturase (419 aa).

The region spanning 1 to 64 (MKSKRQALSP…LKRMPKINPS (64 aa)) is the Cytochrome b5 heme-binding domain. Residues H24 and H47 each coordinate heme. A helical transmembrane segment spans residues 110 to 130 (LGVLGYFLMVQYQMYFIGAVL). The short motif at 143 to 147 (HDICH) is the Histidine box-1 element. The helical transmembrane segment at 156–176 (WNNLVGLVFGNGLQGFSVTCW) threads the bilayer. The short motif at 180–184 (HNAHH) is the Histidine box-2 element. Helical transmembrane passes span 226–246 (YFLV…VLTV), 266–286 (IGLA…MPSI), and 290–310 (LLVF…VVFM). The Histidine box-3 signature appears at 355 to 359 (QIEHH).

The protein belongs to the fatty acid desaturase type 1 family. Fe cation is required as a cofactor.

The protein localises to the membrane. It catalyses the reaction an (11Z,14Z)-icosadienoyl-containing glycerolipid + 2 Fe(II)-[cytochrome b5] + O2 + 2 H(+) = an (8Z,11Z,14Z)-icosatrienoyl-containing glycerolipid + 2 Fe(III)-[cytochrome b5] + 2 H2O. The enzyme catalyses an (11Z,14Z,17Z)-icosatrienoyl-containing glycerolipid + 2 Fe(II)-[cytochrome b5] + O2 + 2 H(+) = an (8Z,11Z,14Z,17Z)-eicosatetraenoyl-containing glycerolipid + 2 Fe(III)-[cytochrome b5] + 2 H2O. The catalysed reaction is an (11Z)-eicosenoyl-containing glycerolipid + 2 Fe(II)-[cytochrome b5] + O2 + 2 H(+) = a (8Z,11Z)-eicosadienoyl-containing glycerolipid + 2 Fe(III)-[cytochrome b5] + 2 H2O. Its pathway is lipid metabolism; fatty acid metabolism. Its function is as follows. Delta(8)-fatty-acid desaturase which introduces a double bond at the 8-position in 20-carbon chain length fatty acids (C20) that have an existing delta-11 unsaturation (double bond). Whether it acts on CoA-linked substrates (as in animals) or phospholipid-linked substrates (as in plants and fungi) is still not clear. This chain is Delta(8)-fatty-acid desaturase (efd1), found in Euglena gracilis.